We begin with the raw amino-acid sequence, 285 residues long: Protein pxr1 (285 aa).

A compositionally biased stretch (basic residues) spans 1 to 11 (MGLAAPRKKIK). Residues 1 to 23 (MGLAAPRKKIKISHDPNNTNWSR) form a disordered region. The G-patch domain maps to 25 to 79 (TSGFGHKILSSQGWTPGSFLGARNAAHAEMFTAASASHIKVVLKDDTLGLGARPK). The disordered stretch occupies residues 144-263 (TPIVTEEPQG…MGRHVFRGRH (120 aa)). Residues 152-163 (QGIHKDKQEDKL) show a composition bias toward basic and acidic residues. Basic residues predominate over residues 190–208 (KKKKSKSKNHREKKDRKRK). The segment covering 224–234 (RSTEKKSKATR) has biased composition (basic and acidic residues). Basic residues predominate over residues 254–263 (MGRHVFRGRH).

This sequence belongs to the PINX1 family.

The protein resides in the nucleus. It is found in the nucleolus. Functionally, involved in rRNA-processing at A0, A1 and A2 sites and negatively regulates telomerase. This is Protein pxr1 (pxr1) from Aspergillus niger (strain ATCC MYA-4892 / CBS 513.88 / FGSC A1513).